A 311-amino-acid polypeptide reads, in one-letter code: Putative ABC transporter ATP-binding protein MG467 (311 aa).

The region spanning 84-310 is the ABC transporter domain; the sequence is ITINKMWKNV…IVSNQLVRPL (227 aa). 122–129 contributes to the ATP binding site; sequence GSSGSGKT.

Belongs to the ABC transporter superfamily.

The protein is Putative ABC transporter ATP-binding protein MG467 of Mycoplasma genitalium (strain ATCC 33530 / DSM 19775 / NCTC 10195 / G37) (Mycoplasmoides genitalium).